A 357-amino-acid polypeptide reads, in one-letter code: U5 small nuclear ribonucleoprotein 40 kDa protein (357 aa).

Lys18 is covalently cross-linked (Glycyl lysine isopeptide (Lys-Gly) (interchain with G-Cter in SUMO2)). Position 21 is an asymmetric dimethylarginine (Arg21). WD repeat units follow at residues 64–103 (GHEG…GNYA), 107–146 (GYSG…RVKR), 149–189 (GHTS…AIQT), 191–230 (QNTY…LTYT), 233–272 (GHAD…PKER), 283–322 (NFEK…ILYK), and 325–357 (GHAG…GEIQ). Lys270 is covalently cross-linked (Glycyl lysine isopeptide (Lys-Gly) (interchain with G-Cter in SUMO2)).

In terms of assembly, component of the pre-catalytic and catalytic spliceosome complexes. Component of the postcatalytic spliceosome P complex. Part of the U5 snRNP complex. Interacts with PRPF8. Component of the U4/U6-U5 tri-snRNP complex composed of the U4, U6 and U5 snRNAs and at least PRPF3, PRPF4, PRPF6, PRPF8, PRPF31, SNRNP200, TXNL4A, WDR57, SNRNP40, DDX23, CD2BP2, PPIH, SNU13, EFTUD2, SART1 and USP39. Component of the minor spliceosome, which splices U12-type introns.

Its subcellular location is the nucleus. Required for pre-mRNA splicing as component of the activated spliceosome. Component of the U5 small nuclear ribonucleoprotein (snRNP) complex and the U4/U6-U5 tri-snRNP complex, building blocks of the spliceosome. As a component of the minor spliceosome, involved in the splicing of U12-type introns in pre-mRNAs. This chain is U5 small nuclear ribonucleoprotein 40 kDa protein (SNRNP40), found in Pongo abelii (Sumatran orangutan).